Here is a 1383-residue protein sequence, read N- to C-terminus: MVILGDEKESYTSYCDKNNDILISKQKIEDLKKSIENLLNDKNAHYELNHIKRSLNELDIYTKNKSDLFNNYNLNESLNDSYKDKTFEELKSQLIKQKNLNSCLSLKLKSIHIKLNNLFLKKNEFEKTINNKIKEIELQFLIIQNVTHENKGIPISKELKEQEKHLQNSHENVAIYDTHEIENNDKKKLYTNFHNEEKDHLKCLLEEYSKTLEIYKMGKIQLEFELKCCKEKLNEEIEKNNNYNNKMKSYEIHIDVVKNENCKNLEELNDLKLQLEKTKSENNQNYVKNKILNDEKNNLDKINNDLKIKIKNFKTLLNDAQNKEYILNNFTQKIFNIITYLKNNDEHNFLNDKIHNKLDINQDQIYVQTELYIDIISSSIRNLINFKKTLEERNVELEKVTHEMKELRKELILKKKNYEELRLKLNHLECVERDSVKINSEKEKGEKVIYELKEKLDNDEKIINDLKKKNSYQVYKMKDYEKRENNLINEINKLKLFIEENKMTVERGNEMNNKKLEEMKQKNKELINNLNDISDELKNCIEQVNSVSRNMANVEKEKENIINELQILRMKNDTMRKRISKFVEQEKVLKFKLYTLNNDIFSKNEKLNDMQKKLNDVNEKYKNIVECLNNYKTEHKEQIEKKIERINTLKQNYYYLKKEYDLKNKELEKNIEHGKKLEHELSHCYEENQKLNEEIKRRNSFIKNKDRKIDLLTNIENELLKKKEINNIKLMEKQNVIKNNEQLLKDIKDENEKMNEHVNKLQNELIKRELQNKCISKDIEFCKKEKEDKIKNLEDDLLEKKKCIENLKDELINIKKKMEDKMHMTNEMDLLSNKVEELNRINKTYEKNIVELNNELDVIKKKLNDEEFLKEEEKKKNIDMVYKIKEYEIQIKEKENEIDSLKKNEQNLHVLKNEELNEKEIILKNKYDKEINMIIEQYNKKIQEEKDMLNNKIKSMDQTHKNQIEEMQEENKKELKRLKNVCDMNLQSQILIKENEKHMQEKVEEYKNLLKQKDQELKNIIQEYDERIEIQNKEMEDIVNDCEEKLKQAKINNKKLTTATNMANNNNMLMDENLKEKDKKINDLMKDMEKKKEEINKLVEEKSKLEHSHVKIQNEMSLLVEQNEKLKEEMGLSRIAIKDMEEIKKDMEKYEEEKKKNEEERKKNEEERKKNEEERKKNEEEKKKNEEERKKNEEEKKKLEKDKHQFEEEKERMEIYEHQKEDRKRKDKKKKGHSSDKEEKYNKKEKTKEKSSNILFDEEYIIQLEELRDTGENCFIYLKSLSKELDVIINKLKSKDDALLNDAFNKINLAITSWNIFNEENKEGDNITTVENTATEGNITIDENTTEVEMNNEEVYKIFSVEKYDMLKKEVGEKVECIQKLIG.

2 coiled-coil regions span residues 16-49 (DKNN…YELN) and 117-324 (NLFL…QNKE). Composition is skewed to basic and acidic residues over residues 1151-1224 (EEEK…EDRK) and 1233-1249 (HSSD…KTKE). The disordered stretch occupies residues 1151-1249 (EEEKKKNEEE…KYNKKEKTKE (99 aa)).

Belongs to the ATG11 family.

Functionally, involved in cytoplasm to vacuole transport (Cvt), pexophagy, mitophagy and nucleophagy. Works as scaffold proteins that recruit ATG proteins to the pre-autophagosome (PAS), the site of vesicle/autophagosome formation. The sequence is that of Putative autophagy-related protein 11 from Plasmodium falciparum (isolate 3D7).